A 337-amino-acid chain; its full sequence is UDP-3-O-acylglucosamine N-acyltransferase (337 aa).

His238 acts as the Proton acceptor in catalysis.

Belongs to the transferase hexapeptide repeat family. LpxD subfamily. Homotrimer.

The enzyme catalyses a UDP-3-O-[(3R)-3-hydroxyacyl]-alpha-D-glucosamine + a (3R)-hydroxyacyl-[ACP] = a UDP-2-N,3-O-bis[(3R)-3-hydroxyacyl]-alpha-D-glucosamine + holo-[ACP] + H(+). The protein operates within bacterial outer membrane biogenesis; LPS lipid A biosynthesis. Its function is as follows. Catalyzes the N-acylation of UDP-3-O-acylglucosamine using 3-hydroxyacyl-ACP as the acyl donor. Is involved in the biosynthesis of lipid A, a phosphorylated glycolipid that anchors the lipopolysaccharide to the outer membrane of the cell. The chain is UDP-3-O-acylglucosamine N-acyltransferase from Xanthomonas axonopodis pv. citri (strain 306).